A 68-amino-acid polypeptide reads, in one-letter code: Protein transport protein Sec61 subunit gamma (68 aa).

Residues 1–32 lie on the Cytoplasmic side of the membrane; it reads MDQVMQFVEPSRQFVKDSIRLVKRCTKPDRKE. Residues 33-61 traverse the membrane as a helical segment; sequence FQKVAMATAIGFAIMGFIGFFVKLIHIPI. Residues 62–68 lie on the Extracellular side of the membrane; sequence NNIIVGG.

Belongs to the SecE/SEC61-gamma family. In terms of assembly, the SEC61 channel-forming translocon complex consists of channel-forming core components SEC61A1, SEC61B and SEC61G and different auxiliary components such as SEC62 and SEC63. The SEC61 channel associates with the multi-pass translocon (MPT) complex.

The protein resides in the endoplasmic reticulum membrane. Its function is as follows. Component of SEC61 channel-forming translocon complex that mediates transport of signal peptide-containing precursor polypeptides across the endoplasmic reticulum (ER). Forms a ribosome receptor and a gated pore in the ER membrane, both functions required for cotranslational translocation of nascent polypeptides. The SEC61 channel is also involved in ER membrane insertion of transmembrane proteins: it mediates membrane insertion of the first few transmembrane segments of proteins, while insertion of subsequent transmembrane regions of multi-pass membrane proteins is mediated by the multi-pass translocon (MPT) complex. This is Protein transport protein Sec61 subunit gamma (sec61g) from Harpagifer antarcticus (Antarctic spiny plunderfish).